A 478-amino-acid chain; its full sequence is Aspartate ammonia-lyase (478 aa).

Positions 104, 143, 144, 145, and 190 each coordinate L-aspartate. Residues 320 to 329 form an SS loop region; that stretch reads GSSIMPAKVN. The active-site Proton acceptor is Ser-321. L-aspartate-binding residues include Ser-322 and Lys-327.

It belongs to the class-II fumarase/aspartase family. Aspartase subfamily. Homotetramer.

It carries out the reaction L-aspartate = fumarate + NH4(+). In terms of biological role, catalyzes the reversible conversion of L-aspartate to fumarate and ammonia. The sequence is that of Aspartate ammonia-lyase (aspA) from Escherichia coli O157:H7.